We begin with the raw amino-acid sequence, 349 residues long: Ribosomal RNA small subunit methyltransferase H (349 aa).

S-adenosyl-L-methionine is bound by residues 34 to 36 (GGH), Asp54, Phe81, Asp102, and Gln109. The interval 328-349 (SRTGSVQHGQAKHKGVVQRGGS) is disordered.

The protein belongs to the methyltransferase superfamily. RsmH family.

The protein resides in the cytoplasm. It catalyses the reaction cytidine(1402) in 16S rRNA + S-adenosyl-L-methionine = N(4)-methylcytidine(1402) in 16S rRNA + S-adenosyl-L-homocysteine + H(+). In terms of biological role, specifically methylates the N4 position of cytidine in position 1402 (C1402) of 16S rRNA. The sequence is that of Ribosomal RNA small subunit methyltransferase H from Dehalococcoides mccartyi (strain ATCC BAA-2100 / JCM 16839 / KCTC 5957 / BAV1).